The primary structure comprises 264 residues: MKQYIKLIKKIIRVGNQKKDRTGTGTLSIFGYNMKFDLKKGFPLLTTKKCHIASIIYELLWFLKGDTNIAYLNENKISIWNNWANESGDVGPIYGKQWRNWSTPEGHEIDQIKNVLIQLKKNPDSRRMLVSSWNVGDIDKMRLPPCHVLFQFYVFNNTLSCQLYQRSCDVFLGLPFNIASYSILIHMIAQQCDLKVGDFLWTGGDVHLYNNHIELAKKQILRIPRTLPKLTILKKPQSLFQYCFEDFKIIGYHPYPAIKGKISI.

DUMP is bound at residue arginine 21. Residue histidine 51 coordinates (6R)-5,10-methylene-5,6,7,8-tetrahydrofolate. 126-127 is a binding site for dUMP; that stretch reads RR. The active-site Nucleophile is the cysteine 146. DUMP-binding positions include 166-169, asparagine 177, and 207-209; these read RSCD and HLY. Residue aspartate 169 coordinates (6R)-5,10-methylene-5,6,7,8-tetrahydrofolate. Position 263 (serine 263) interacts with (6R)-5,10-methylene-5,6,7,8-tetrahydrofolate.

Belongs to the thymidylate synthase family. Bacterial-type ThyA subfamily. As to quaternary structure, homodimer.

Its subcellular location is the cytoplasm. The enzyme catalyses dUMP + (6R)-5,10-methylene-5,6,7,8-tetrahydrofolate = 7,8-dihydrofolate + dTMP. It functions in the pathway pyrimidine metabolism; dTTP biosynthesis. Its function is as follows. Catalyzes the reductive methylation of 2'-deoxyuridine-5'-monophosphate (dUMP) to 2'-deoxythymidine-5'-monophosphate (dTMP) while utilizing 5,10-methylenetetrahydrofolate (mTHF) as the methyl donor and reductant in the reaction, yielding dihydrofolate (DHF) as a by-product. This enzymatic reaction provides an intracellular de novo source of dTMP, an essential precursor for DNA biosynthesis. The sequence is that of Thymidylate synthase from Buchnera aphidicola subsp. Acyrthosiphon pisum (strain 5A).